We begin with the raw amino-acid sequence, 217 residues long: Orotidine 5'-phosphate decarboxylase (217 aa).

Residues Asp14, Lys36, 64–73 (DFKVADIPST), Ser120, 172–182 (PGVGAQGGNLS), Gly197, and Arg198 each bind substrate. Catalysis depends on Lys66, which acts as the Proton donor.

Belongs to the OMP decarboxylase family. Type 1 subfamily. Homodimer.

The catalysed reaction is orotidine 5'-phosphate + H(+) = UMP + CO2. It participates in pyrimidine metabolism; UMP biosynthesis via de novo pathway; UMP from orotate: step 2/2. Catalyzes the decarboxylation of orotidine 5'-monophosphate (OMP) to uridine 5'-monophosphate (UMP). The protein is Orotidine 5'-phosphate decarboxylase of Methanococcus maripaludis (strain C6 / ATCC BAA-1332).